We begin with the raw amino-acid sequence, 284 residues long: 4-diphosphocytidyl-2-C-methyl-D-erythritol kinase (284 aa).

Residue Lys14 is part of the active site. 98 to 108 (PMGGGLGGGSS) lines the ATP pocket. Asp140 is an active-site residue.

This sequence belongs to the GHMP kinase family. IspE subfamily.

It catalyses the reaction 4-CDP-2-C-methyl-D-erythritol + ATP = 4-CDP-2-C-methyl-D-erythritol 2-phosphate + ADP + H(+). The protein operates within isoprenoid biosynthesis; isopentenyl diphosphate biosynthesis via DXP pathway; isopentenyl diphosphate from 1-deoxy-D-xylulose 5-phosphate: step 3/6. Its function is as follows. Catalyzes the phosphorylation of the position 2 hydroxy group of 4-diphosphocytidyl-2C-methyl-D-erythritol. In Shewanella piezotolerans (strain WP3 / JCM 13877), this protein is 4-diphosphocytidyl-2-C-methyl-D-erythritol kinase.